A 367-amino-acid polypeptide reads, in one-letter code: Serine O-succinyltransferase (367 aa).

The AB hydrolase-1 domain maps to 41–351; sequence NAVLILTGLS…SPQGHDAFLV (311 aa). Residues 48–51 form an important for substrate specificity region; the sequence is GLSP. Ser146 serves as the catalytic Nucleophile. Arg215 provides a ligand contact to substrate. Active-site residues include Asp313 and His346. Asp347 lines the substrate pocket.

This sequence belongs to the AB hydrolase superfamily. MetX family. As to quaternary structure, homodimer.

Its subcellular location is the cytoplasm. The catalysed reaction is succinyl-CoA + L-serine = O-succinyl-L-serine + CoA. It catalyses the reaction L-homoserine + succinyl-CoA = O-succinyl-L-homoserine + CoA. The protein operates within amino-acid biosynthesis; L-cysteine biosynthesis; L-cysteine from L-serine: step 1/2. Functionally, transfers a succinyl group from succinyl-CoA to L-serine, forming succinyl-L-serine. In vitro, also has homoserine succinyl transferase activity. This chain is Serine O-succinyltransferase, found in Frateuria aurantia (strain ATCC 33424 / DSM 6220 / KCTC 2777 / LMG 1558 / NBRC 3245 / NCIMB 13370) (Acetobacter aurantius).